A 137-amino-acid polypeptide reads, in one-letter code: MPNFAGTWKMKSSENFDELLKALGVNTMLRKVAVAAASNPHVEIRQDGEKFYIKTSTTVRTTEINFHIGEEFDEETVDGRKCKSLPTWESENKIRCKQTLVEGDGPKTFWTRELNGDELTLVFGADDVVCTRIYVRE.

A Nuclear localization signal motif is present at residues 21–31; it reads KALGVNTMLRK. Residue 132–134 participates in all-trans-retinoate binding; it reads RIY.

This sequence belongs to the calycin superfamily. Fatty-acid binding protein (FABP) family.

It localises to the cytoplasm. In terms of biological role, cytosolic CRABPs may regulate the access of retinoic acid to the nuclear retinoic acid receptors. The sequence is that of Cellular retinoic acid-binding protein 1 (crabp1) from Takifugu rubripes (Japanese pufferfish).